The chain runs to 433 residues: Trigger factor (433 aa).

Residues 161–246 form the PPIase FKBP-type domain; sequence GKRVSIDFVG…VNKVEARELP (86 aa).

The protein belongs to the FKBP-type PPIase family. Tig subfamily.

It is found in the cytoplasm. The enzyme catalyses [protein]-peptidylproline (omega=180) = [protein]-peptidylproline (omega=0). Its function is as follows. Involved in protein export. Acts as a chaperone by maintaining the newly synthesized protein in an open conformation. Functions as a peptidyl-prolyl cis-trans isomerase. The protein is Trigger factor of Vibrio cholerae serotype O1 (strain ATCC 39541 / Classical Ogawa 395 / O395).